The sequence spans 419 residues: MNIASQIEDMGRRARAAGRRLAAASPAAKAGALDHLATLLEQRQDAILAANAADLAAAAEAGMDAPRMDRLRLTPATIAEMAAACRHVAALPDPVGAIETQWQRPNGLLVGKMRIPLGVIAMIYESRPNVTIDSAILCLKAGNAVILRGGSEAIHSNLALAALITEALSSVGLPAEAVQVVSTTDRAVIAELCKLEEHIDVIIPRGGETLIRAVVDMARMPVLKHYKGVCHAYIDRGADLAQAVEIIHNAKVQRPGVCNALEGLLVHRDEAAAFLPAIAERLGNDGVEFRACPASLPLLGDSAIPMKDEDNGQEFHDLILLVRIVDDMDEALAHIAAYGSNHTEIICTRDHGNAMRFLREADASMVAVNASSRFNDGGQLGLGAEIGISTSKLHSYGPMGVQELTTTKFVVFGAGQIRQ.

Belongs to the gamma-glutamyl phosphate reductase family.

It localises to the cytoplasm. The enzyme catalyses L-glutamate 5-semialdehyde + phosphate + NADP(+) = L-glutamyl 5-phosphate + NADPH + H(+). It participates in amino-acid biosynthesis; L-proline biosynthesis; L-glutamate 5-semialdehyde from L-glutamate: step 2/2. Functionally, catalyzes the NADPH-dependent reduction of L-glutamate 5-phosphate into L-glutamate 5-semialdehyde and phosphate. The product spontaneously undergoes cyclization to form 1-pyrroline-5-carboxylate. The chain is Gamma-glutamyl phosphate reductase from Nitratidesulfovibrio vulgaris (strain DP4) (Desulfovibrio vulgaris).